We begin with the raw amino-acid sequence, 357 residues long: Elongation factor Ts (357 aa).

Positions 82–85 (TDFV) are involved in Mg(2+) ion dislocation from EF-Tu.

The protein belongs to the EF-Ts family.

The protein localises to the cytoplasm. Its function is as follows. Associates with the EF-Tu.GDP complex and induces the exchange of GDP to GTP. It remains bound to the aminoacyl-tRNA.EF-Tu.GTP complex up to the GTP hydrolysis stage on the ribosome. This chain is Elongation factor Ts, found in Campylobacter jejuni subsp. doylei (strain ATCC BAA-1458 / RM4099 / 269.97).